An 872-amino-acid chain; its full sequence is Coatomer subunit gamma-2 (872 aa).

HEAT repeat units lie at residues 64-101 (MEAT…ISED), 283-320 (RELA…KHPS), 321-355 (AVTA…GSES), 356-392 (SVDR…KYPR), 395-430 (SVMM…ENPD), and 467-504 (PTPS…QNEP).

This sequence belongs to the COPG family. In terms of assembly, oligomeric complex.

It localises to the cytoplasm. It is found in the golgi apparatus membrane. The protein localises to the cytoplasmic vesicle. The protein resides in the COPI-coated vesicle membrane. Its function is as follows. The coatomer is a cytosolic protein complex that binds to dilysine motifs and reversibly associates with Golgi non-clathrin-coated vesicles, which further mediate biosynthetic protein transport from the ER, via the Golgi up to the trans Golgi network. Coatomer complex is required for budding from Golgi membranes, and is essential for the retrograde Golgi-to-ER transport of dilysine-tagged proteins. In Xenopus tropicalis (Western clawed frog), this protein is Coatomer subunit gamma-2 (copg2).